The primary structure comprises 355 residues: S-adenosylmethionine:tRNA ribosyltransferase-isomerase (355 aa).

It belongs to the QueA family. In terms of assembly, monomer.

The protein localises to the cytoplasm. It catalyses the reaction 7-aminomethyl-7-carbaguanosine(34) in tRNA + S-adenosyl-L-methionine = epoxyqueuosine(34) in tRNA + adenine + L-methionine + 2 H(+). It participates in tRNA modification; tRNA-queuosine biosynthesis. Functionally, transfers and isomerizes the ribose moiety from AdoMet to the 7-aminomethyl group of 7-deazaguanine (preQ1-tRNA) to give epoxyqueuosine (oQ-tRNA). This Aeromonas salmonicida (strain A449) protein is S-adenosylmethionine:tRNA ribosyltransferase-isomerase.